We begin with the raw amino-acid sequence, 255 residues long: Acetylglutamate kinase (255 aa).

Substrate is bound by residues 40 to 41, R62, and N153; that span reads GG.

The protein belongs to the acetylglutamate kinase family. ArgB subfamily.

The protein localises to the cytoplasm. The enzyme catalyses N-acetyl-L-glutamate + ATP = N-acetyl-L-glutamyl 5-phosphate + ADP. The protein operates within amino-acid biosynthesis; L-arginine biosynthesis; N(2)-acetyl-L-ornithine from L-glutamate: step 2/4. In terms of biological role, catalyzes the ATP-dependent phosphorylation of N-acetyl-L-glutamate. The chain is Acetylglutamate kinase from Bacillus cereus (strain ATCC 14579 / DSM 31 / CCUG 7414 / JCM 2152 / NBRC 15305 / NCIMB 9373 / NCTC 2599 / NRRL B-3711).